The chain runs to 282 residues: MTDVLAVIREMSSSFTPSEAKIAKYILENPTVVTELSVNELANACDTSEASIIRFCRTIGLKGFQELKIKIAVSLAKQTRKLDGGITSEDDVMAVIQKIANFNKQAIDSTIAVLNAEELTKAAEALANANKIDFYGVAASGVVAYDAMLKFSRINIPCTAYQDTHLQLTSAVNLKKGDVAFGISYSGATKEIVEAIQTAKEAGATTISLTKYGQSPLAKAADINLFVSSEEAMFRAGAMASRIAQLTVIDILFILVAQKKYNDVVRYLENTSEVLSMRKINN.

Residues 2-78 (TDVLAVIREM…IKIAVSLAKQ (77 aa)) form the HTH rpiR-type domain. A DNA-binding region (H-T-H motif) is located at residues 38 to 57 (VNELANACDTSEASIIRFCR). The SIS domain maps to 122–262 (AAEALANANK…FILVAQKKYN (141 aa)).

This is an uncharacterized protein from Caldanaerobacter subterraneus subsp. tengcongensis (strain DSM 15242 / JCM 11007 / NBRC 100824 / MB4) (Thermoanaerobacter tengcongensis).